An 897-amino-acid chain; its full sequence is Zinc finger protein zas1 (897 aa).

2 C2H2-type zinc fingers span residues 26–50 (FYCTYPDCPKSFTRKEHLRRHERTH) and 56–79 (FSCSFCNRAFARSDVLNRHVQQMH). A C2H2-type 3; atypical zinc finger spans residues 93–119 (ASCFLGFCVLAHDYVNLINARHFMIEH).

The protein resides in the nucleus. The protein is Zinc finger protein zas1 (zas1) of Schizosaccharomyces pombe (strain 972 / ATCC 24843) (Fission yeast).